We begin with the raw amino-acid sequence, 543 residues long: MTRYVFITGGVVSSLGKGIASASLGALLQARGYSVRLRKLDPYLNVDPGTMSPYQHGEVFVTDDGAETDLDLGHYERFTGVHATKSDNATTGRIYSEVIARERRGDYLGATVQVIPHITDAIKQAILRETAGLDFVLVEIGGTVGDIESLPFLEAIRQLGNELGPHDAMFVHLTLVPYIPSAGELKTKPTQHSVKELLNVGIQPHMLICRCDRPIPEGERRKIALFCNVRPEAVVPALDVGTIYEVPISYHEAGLDREVLRHFGLPHDAEPDLGRWRRIVETVRNPEGEVTIAVVGKYTNLLDSYKSLGEALTHGGIANRVRVRLDWVDSEIFEQPGAVARLDGVHGILVPGGFGERGTGGKIEAVRFARERHVPFLGICFGMQMAVIEAARNLAGLPGASSTEFGPCEVPVVGLLTEWARGNEIERRAAEGDLGGTMRLGAYAATLVEGSLVRAVYGDAATIEERHRHRYEVNIHYRERLESAGLRFSGLSPDGLLPEIVEYPDHPWFIGVQYHPELKSKPFDPHPLFAGFIEAAVKQMRLV.

Residues 1–265 (MTRYVFITGG…DREVLRHFGL (265 aa)) form an amidoligase domain region. Position 13 (serine 13) interacts with CTP. Serine 13 is a binding site for UTP. Position 14-19 (14-19 (SLGKGI)) interacts with ATP. Tyrosine 54 lines the L-glutamine pocket. Aspartate 71 contributes to the ATP binding site. Mg(2+) is bound by residues aspartate 71 and glutamate 139. CTP contacts are provided by residues 146–148 (DIE), 186–191 (KTKPTQ), and lysine 222. UTP is bound by residues 186–191 (KTKPTQ) and lysine 222. An ATP-binding site is contributed by valine 240. A Glutamine amidotransferase type-1 domain is found at 291 to 542 (TIAVVGKYTN…IEAAVKQMRL (252 aa)). Residue glycine 353 coordinates L-glutamine. Residue cysteine 380 is the Nucleophile; for glutamine hydrolysis of the active site. Residues 381–384 (FGMQ), glutamate 404, and arginine 470 each bind L-glutamine. Active-site residues include histidine 515 and glutamate 517.

It belongs to the CTP synthase family. Homotetramer.

It catalyses the reaction UTP + L-glutamine + ATP + H2O = CTP + L-glutamate + ADP + phosphate + 2 H(+). The enzyme catalyses L-glutamine + H2O = L-glutamate + NH4(+). It carries out the reaction UTP + NH4(+) + ATP = CTP + ADP + phosphate + 2 H(+). It functions in the pathway pyrimidine metabolism; CTP biosynthesis via de novo pathway; CTP from UDP: step 2/2. Allosterically activated by GTP, when glutamine is the substrate; GTP has no effect on the reaction when ammonia is the substrate. The allosteric effector GTP functions by stabilizing the protein conformation that binds the tetrahedral intermediate(s) formed during glutamine hydrolysis. Inhibited by the product CTP, via allosteric rather than competitive inhibition. Functionally, catalyzes the ATP-dependent amination of UTP to CTP with either L-glutamine or ammonia as the source of nitrogen. Regulates intracellular CTP levels through interactions with the four ribonucleotide triphosphates. This is CTP synthase from Acidiphilium cryptum (strain JF-5).